We begin with the raw amino-acid sequence, 95 residues long: Small ribosomal subunit protein bS6 (95 aa).

It belongs to the bacterial ribosomal protein bS6 family.

In terms of biological role, binds together with bS18 to 16S ribosomal RNA. The protein is Small ribosomal subunit protein bS6 of Geobacillus sp. (strain WCH70).